Here is a 258-residue protein sequence, read N- to C-terminus: Imidazole glycerol phosphate synthase subunit HisF (258 aa).

Active-site residues include Asp-12 and Asp-131.

The protein belongs to the HisA/HisF family. In terms of assembly, heterodimer of HisH and HisF.

The protein localises to the cytoplasm. It carries out the reaction 5-[(5-phospho-1-deoxy-D-ribulos-1-ylimino)methylamino]-1-(5-phospho-beta-D-ribosyl)imidazole-4-carboxamide + L-glutamine = D-erythro-1-(imidazol-4-yl)glycerol 3-phosphate + 5-amino-1-(5-phospho-beta-D-ribosyl)imidazole-4-carboxamide + L-glutamate + H(+). It functions in the pathway amino-acid biosynthesis; L-histidine biosynthesis; L-histidine from 5-phospho-alpha-D-ribose 1-diphosphate: step 5/9. Functionally, IGPS catalyzes the conversion of PRFAR and glutamine to IGP, AICAR and glutamate. The HisF subunit catalyzes the cyclization activity that produces IGP and AICAR from PRFAR using the ammonia provided by the HisH subunit. In Nitrosomonas eutropha (strain DSM 101675 / C91 / Nm57), this protein is Imidazole glycerol phosphate synthase subunit HisF.